Here is a 125-residue protein sequence, read N- to C-terminus: Protein sigma-1-small (125 aa).

Belongs to the orthoreovirus sigma-1s protein family.

The polypeptide is Protein sigma-1-small (S1) (Mammalia (T2J)).